The chain runs to 185 residues: GTP cyclohydrolase 1 (185 aa).

3 residues coordinate Zn(2+): C76, H79, and C147.

Belongs to the GTP cyclohydrolase I family. Toroid-shaped homodecamer, composed of two pentamers of five dimers.

It catalyses the reaction GTP + H2O = 7,8-dihydroneopterin 3'-triphosphate + formate + H(+). The protein operates within cofactor biosynthesis; 7,8-dihydroneopterin triphosphate biosynthesis; 7,8-dihydroneopterin triphosphate from GTP: step 1/1. The polypeptide is GTP cyclohydrolase 1 (Clostridium perfringens (strain 13 / Type A)).